We begin with the raw amino-acid sequence, 184 residues long: UPF0316 protein BLi00691/BL01474 (184 aa).

The next 3 helical transmembrane spans lie at 9 to 29 (GVIMVGIILVINIIYVTFLTL), 41 to 61 (LAAFIGTIEMLVYVVGLGLVL), and 67 to 87 (IQNVIAYAVGFGIGIIVGTKI).

The protein belongs to the UPF0316 family.

Its subcellular location is the cell membrane. This Bacillus licheniformis (strain ATCC 14580 / DSM 13 / JCM 2505 / CCUG 7422 / NBRC 12200 / NCIMB 9375 / NCTC 10341 / NRRL NRS-1264 / Gibson 46) protein is UPF0316 protein BLi00691/BL01474.